A 397-amino-acid polypeptide reads, in one-letter code: Elongation factor Tu (397 aa).

One can recognise a tr-type G domain in the interval 10–207 (KPHCNIGTIG…AVDEYIPQPE (198 aa)). A G1 region spans residues 19 to 26 (GHVDHGKT). Residue 19-26 (GHVDHGKT) coordinates GTP. Position 26 (T26) interacts with Mg(2+). The G2 stretch occupies residues 61–65 (GITIS). The tract at residues 82 to 85 (DCPG) is G3. GTP is bound by residues 82-86 (DCPGH) and 137-140 (NKVD). Residues 137–140 (NKVD) are G4. Residues 175 to 177 (SAL) form a G5 region.

Belongs to the TRAFAC class translation factor GTPase superfamily. Classic translation factor GTPase family. EF-Tu/EF-1A subfamily. As to quaternary structure, monomer.

Its subcellular location is the cytoplasm. The catalysed reaction is GTP + H2O = GDP + phosphate + H(+). In terms of biological role, GTP hydrolase that promotes the GTP-dependent binding of aminoacyl-tRNA to the A-site of ribosomes during protein biosynthesis. The chain is Elongation factor Tu from Zymomonas mobilis subsp. mobilis (strain ATCC 31821 / ZM4 / CP4).